The following is a 132-amino-acid chain: Holo-[acyl-carrier-protein] synthase (132 aa).

The Mg(2+) site is built by Asp8 and Glu57.

This sequence belongs to the P-Pant transferase superfamily. AcpS family. Mg(2+) is required as a cofactor.

The protein localises to the cytoplasm. The enzyme catalyses apo-[ACP] + CoA = holo-[ACP] + adenosine 3',5'-bisphosphate + H(+). Transfers the 4'-phosphopantetheine moiety from coenzyme A to a Ser of acyl-carrier-protein. The chain is Holo-[acyl-carrier-protein] synthase from Methylobacterium nodulans (strain LMG 21967 / CNCM I-2342 / ORS 2060).